The primary structure comprises 359 residues: Insulin gene enhancer protein ISL-2 (359 aa).

2 LIM zinc-binding domains span residues 25–86 (AMCV…RLFG) and 87–149 (IKCA…LLER). The segment at 151 to 190 (AAGSPRSPGPLPGARGLHLPDAGSGRQPSLRTHVHKQAEK) is disordered. Residues S154 and S157 each carry the phosphoserine modification. The segment at residues 191 to 250 (TTRVRTVLNEKQLHTLRTCYAANPRPDALMKEQLVEMTGLSPRVIRVWFQNKRCKDKKKS) is a DNA-binding region (homeobox). Positions 272–301 (GTPLVAGSPIRHENAVQGSAVEVQTYQPPW) are LIM-binding domain (LID). Residue S279 is modified to Phosphoserine. Positions 326–336 (ESGSLGNSSGS) are enriched in low complexity. A disordered region spans residues 326-359 (ESGSLGNSSGSDVTSLSSQLPDTPNSMVPSPVET). The span at 337-359 (DVTSLSSQLPDTPNSMVPSPVET) shows a compositional bias: polar residues.

Interacts with LHX4.

Its subcellular location is the nucleus. In terms of biological role, transcriptional factor that defines subclasses of motoneurons that segregate into columns in the spinal cord and select distinct axon pathways. The sequence is that of Insulin gene enhancer protein ISL-2 (Isl2) from Mus musculus (Mouse).